A 181-amino-acid polypeptide reads, in one-letter code: ATP-dependent protease subunit HslV (181 aa).

Thr-8 is a catalytic residue. Positions 165, 168, and 171 each coordinate Na(+).

This sequence belongs to the peptidase T1B family. HslV subfamily. As to quaternary structure, a double ring-shaped homohexamer of HslV is capped on each side by a ring-shaped HslU homohexamer. The assembly of the HslU/HslV complex is dependent on binding of ATP.

The protein localises to the cytoplasm. It catalyses the reaction ATP-dependent cleavage of peptide bonds with broad specificity.. With respect to regulation, allosterically activated by HslU binding. In terms of biological role, protease subunit of a proteasome-like degradation complex believed to be a general protein degrading machinery. The polypeptide is ATP-dependent protease subunit HslV (Oceanobacillus iheyensis (strain DSM 14371 / CIP 107618 / JCM 11309 / KCTC 3954 / HTE831)).